A 398-amino-acid polypeptide reads, in one-letter code: Cholinephosphotransferase 1 (398 aa).

Ala2 is modified (N-acetylalanine). The Cytoplasmic segment spans residues 2–62 (AAGAGARPAP…LLQWIPLWMA (61 aa)). Residues 63–83 (PNTITLIGLAINLVTTLVLIF) form a helical membrane-spanning segment. Asn64 serves as a coordination point for CDP-choline. The Lumenal segment spans residues 84-93 (YCPTVTEEAP). The chain crosses the membrane as a helical span at residues 94-118 (YWTYLLCALGLFIYQSLDAIDGKQA). Residues Asp111 and Asp114 each contribute to the Mg(2+) site. Position 119 (Arg119) interacts with CDP-choline. Residues 119 to 125 (RRTNSCS) are Cytoplasmic-facing. The chain crosses the membrane as a helical span at residues 126-150 (PLGELFDHGCDSLSTVFMAIGASIA). Asp132 contacts Mg(2+). His133 serves as the catalytic Proton acceptor. Position 136 (Asp136) interacts with Mg(2+). At 151-160 (VRLGTHPDWL) the chain is on the lumenal side. The chain crosses the membrane as a helical span at residues 161-179 (FFCSFVGMFMFYCAHWQTY). Over 180–190 (VSGVLRFGRVD) the chain is Cytoplasmic. Residues 191–207 (VTEIQVALVIVFMLSTF) traverse the membrane as a helical segment. Residues 208–222 (GGATMWDYTIPILEI) lie on the Lumenal side of the membrane. A helical transmembrane segment spans residues 223–248 (KLKIVPVLGVVGGLIFSCSNYFHVIL). Over 249 to 265 (HGGVGKNGSTIAGTSVL) the chain is Cytoplasmic. Residues 266-281 (SPGLHIGLIIILAIMI) form a helical membrane-spanning segment. The Lumenal segment spans residues 282–293 (YKKSATNMFEKH). Residues 294-316 (PCLYTLMFGCVFAKVAQKLVIAH) traverse the membrane as a helical segment. The Cytoplasmic portion of the chain corresponds to 317 to 329 (MTKSELYLQDTVF). Residues 330–339 (IGPGLLFLDQ) traverse the membrane as a helical segment. Over 340 to 346 (YFNNFID) the chain is Lumenal. A helical membrane pass occupies residues 347-376 (EYVVLWIAMVISSFDMMIYFTSLCLQISRH). The Cytoplasmic portion of the chain corresponds to 377-398 (LHLNIFKTSCQQAPEQVYKHID).

This sequence belongs to the CDP-alcohol phosphatidyltransferase class-I family. The cofactor is Mg(2+). Mn(2+) serves as cofactor. As to expression, expressed in brain, heart, lung, liver, spleen, intestine and muscle. Down-regulated in kidney of type 2 diabetic KK/Ta mice.

The protein resides in the golgi apparatus membrane. The catalysed reaction is CDP-choline + a 1,2-diacyl-sn-glycerol = a 1,2-diacyl-sn-glycero-3-phosphocholine + CMP + H(+). It catalyses the reaction 1-octadecanoyl-2-(5Z,8Z,11Z,14Z-eicosatetraenoyl)-sn-glycerol + CDP-choline = 1-octadecanoyl-2-(5Z,8Z,11Z,14Z-eicosatetraenoyl)-sn-glycero-3-phosphocholine + CMP + H(+). It carries out the reaction 1-hexadecanoyl-2-(9Z-octadecenoyl)-sn-glycerol + CDP-choline = 1-hexadecanoyl-2-(9Z-octadecenoyl)-sn-glycero-3-phosphocholine + CMP + H(+). The enzyme catalyses 1-hexadecanoyl-2-(4Z,7Z,10Z,13Z,16Z,19Z-docosahexaenoyl)-sn-glycerol + CDP-choline = 1-hexadecanoyl-2-(4Z,7Z,10Z,13Z,16Z,19Z-docosahexaenoyl)-sn-glycero-3-phosphocholine + CMP + H(+). The catalysed reaction is 1,2-dioctanoyl-sn-glycerol + CDP-choline = 1,2-dioctanoyl-sn-glycero-3-phosphocholine + CMP + H(+). Its pathway is phospholipid metabolism; phosphatidylcholine biosynthesis; phosphatidylcholine from phosphocholine: step 2/2. In terms of biological role, catalyzes the final step of de novo phosphatidylcholine (PC) synthesis, i.e. the transfer of choline phosphate from CDP-choline to the free hydroxyl of a diacylglycerol (DAG), producing a PC. It thereby plays a central role in the formation and maintenance of vesicular membranes. In Mus musculus (Mouse), this protein is Cholinephosphotransferase 1.